Consider the following 134-residue polypeptide: Small ribosomal subunit protein uS8 (134 aa).

It belongs to the universal ribosomal protein uS8 family. Part of the 30S ribosomal subunit. Contacts proteins S5 and S12.

In terms of biological role, one of the primary rRNA binding proteins, it binds directly to 16S rRNA central domain where it helps coordinate assembly of the platform of the 30S subunit. The sequence is that of Small ribosomal subunit protein uS8 from Fervidobacterium nodosum (strain ATCC 35602 / DSM 5306 / Rt17-B1).